Here is a 273-residue protein sequence, read N- to C-terminus: 3-methyl-2-oxobutanoate hydroxymethyltransferase 3 (273 aa).

Residues aspartate 49 and aspartate 88 each coordinate Mg(2+). 3-methyl-2-oxobutanoate-binding positions include 49-50, aspartate 88, and lysine 118; that span reads DS. Residue glutamate 120 coordinates Mg(2+). Glutamate 187 acts as the Proton acceptor in catalysis.

This sequence belongs to the PanB family. Homodecamer; pentamer of dimers. The cofactor is Mg(2+).

Its subcellular location is the cytoplasm. It catalyses the reaction 3-methyl-2-oxobutanoate + (6R)-5,10-methylene-5,6,7,8-tetrahydrofolate + H2O = 2-dehydropantoate + (6S)-5,6,7,8-tetrahydrofolate. Its pathway is cofactor biosynthesis; (R)-pantothenate biosynthesis; (R)-pantoate from 3-methyl-2-oxobutanoate: step 1/2. Functionally, catalyzes the reversible reaction in which hydroxymethyl group from 5,10-methylenetetrahydrofolate is transferred onto alpha-ketoisovalerate to form ketopantoate. The protein is 3-methyl-2-oxobutanoate hydroxymethyltransferase 3 of Bradyrhizobium diazoefficiens (strain JCM 10833 / BCRC 13528 / IAM 13628 / NBRC 14792 / USDA 110).